We begin with the raw amino-acid sequence, 184 residues long: GTP cyclohydrolase 1 (184 aa).

3 residues coordinate Zn(2+): C75, H78, and C146.

It belongs to the GTP cyclohydrolase I family. Homomer.

It carries out the reaction GTP + H2O = 7,8-dihydroneopterin 3'-triphosphate + formate + H(+). The protein operates within cofactor biosynthesis; 7,8-dihydroneopterin triphosphate biosynthesis; 7,8-dihydroneopterin triphosphate from GTP: step 1/1. This is GTP cyclohydrolase 1 from Coxiella burnetii (strain Dugway 5J108-111).